The primary structure comprises 113 residues: Beta-microseminoprotein (113 aa).

The signal sequence occupies residues Met-1 to Ala-20. 5 disulfide bridges follow: Cys-22-Cys-69, Cys-38-Cys-61, Cys-56-Cys-92, Cys-59-Cys-68, and Cys-83-Cys-106.

This sequence belongs to the beta-microseminoprotein family. Homodimer; Interacts with PI16.

It localises to the secreted. The chain is Beta-microseminoprotein (Msmb) from Rattus norvegicus (Rat).